Consider the following 421-residue polypeptide: Acylglycerol kinase, mitochondrial (421 aa).

The residue at position 6 (Lys-6) is an N6-acetyllysine. Residues 15–31 (TTAGLCLLTWGGHWLYG) form a hydrophobic region. Positions 58 to 199 (AQVKKATVFL…LDVLQIKGEK (142 aa)) constitute a DAGKc domain. A disordered region spans residues 252-271 (ISYTGPRERPPIEPEETPPR).

It belongs to the AGK family. Component of the TIM22 complex, which core is composed of TIMM22, associated with TIMM10 (TIMM10A and/or TIMM10B), TIMM9, AGK and TIMM29. Interacts with SMIM26. Requires Mg(2+) as cofactor. In terms of tissue distribution, ubiquitously expressed.

It is found in the mitochondrion inner membrane. Its subcellular location is the mitochondrion intermembrane space. The enzyme catalyses a monoacylglycerol + ATP = a monoacyl-sn-glycero-3-phosphate + ADP + H(+). The catalysed reaction is a 1,2-diacyl-sn-glycerol + ATP = a 1,2-diacyl-sn-glycero-3-phosphate + ADP + H(+). It catalyses the reaction an N-acylsphing-4-enine + ATP = an N-acylsphing-4-enine 1-phosphate + ADP + H(+). It carries out the reaction 1,2-di-(9Z-octadecenoyl)-sn-glycerol + ATP = 1,2-di-(9Z-octadecenoyl)-sn-glycero-3-phosphate + ADP + H(+). The enzyme catalyses 1-(9Z-octadecenoyl)-sn-glycerol + ATP = 1-(9Z-octadecenoyl)-sn-glycero-3-phosphate + ADP + H(+). The catalysed reaction is 1-(5Z,8Z,11Z,14Z-eicosatetraenoyl)-sn-glycerol + ATP = 1-(5Z,8Z,11Z,14Z-eicosatetraenoyl)-sn-glycero-3-phosphate + ADP + H(+). It catalyses the reaction a 1-acyl-sn-glycerol + ATP = a 1-acyl-sn-glycero-3-phosphate + ADP + H(+). It carries out the reaction 1-hexadecanoyl-sn-glycerol + ATP = 1-hexadecanoyl-sn-glycero-3-phosphate + ADP + H(+). The enzyme catalyses a 2-acylglycerol + ATP = a 2-acyl-sn-glycerol 3-phosphate + ADP + H(+). The catalysed reaction is 2-(5Z,8Z,11Z,14Z-eicosatetraenoyl)-glycerol + ATP = 2-(5Z,8Z,11Z,14Z-eicosatetraenoyl)-sn-glycero-3-phosphate + ADP + H(+). It catalyses the reaction N-(hexanoyl)sphing-4-enine + ATP = N-hexanoylsphing-4-enine 1-phosphate + ADP + H(+). It functions in the pathway lipid metabolism; glycerolipid metabolism. Both the ceramide and diacylglycerol kinase activities are inhibited by sphingosine and stimulated by cardiolipin. Both activities are stimulated by calcium when magnesium concentrations are low but inhibited by calcium when magnesium concentrations are high. In terms of biological role, lipid kinase that can phosphorylate both monoacylglycerol and diacylglycerol to form lysophosphatidic acid (LPA) and phosphatidic acid (PA), respectively. Phosphorylates ceramide but not sphingosine. Phosphorylates 1,2-dioleoylglycerol more rapidly than 2,3-dioleoylglycerol. Independently of its lipid kinase activity, acts as a component of the TIM22 complex. The TIM22 complex mediates the import and insertion of multi-pass transmembrane proteins into the mitochondrial inner membrane by forming a twin-pore translocase that uses the membrane potential as the external driving force. In the TIM22 complex, required for the import of a subset of metabolite carriers into mitochondria, such as ANT1/SLC25A4 and SLC25A24, while it is not required for the import of TIMM23. Overexpression increases the formation and secretion of LPA, resulting in transactivation of EGFR and activation of the downstream MAPK signaling pathway, leading to increased cell growth. The sequence is that of Acylglycerol kinase, mitochondrial from Mus musculus (Mouse).